The following is a 211-amino-acid chain: Imidazole glycerol phosphate synthase subunit HisH (211 aa).

The region spanning 1 to 206 (MIGIIDYGRG…GKWVNEDATV (206 aa)) is the Glutamine amidotransferase type-1 domain. Cys-79 functions as the Nucleophile in the catalytic mechanism. Catalysis depends on residues His-181 and Glu-183.

As to quaternary structure, heterodimer of HisH and HisF.

It localises to the cytoplasm. The enzyme catalyses 5-[(5-phospho-1-deoxy-D-ribulos-1-ylimino)methylamino]-1-(5-phospho-beta-D-ribosyl)imidazole-4-carboxamide + L-glutamine = D-erythro-1-(imidazol-4-yl)glycerol 3-phosphate + 5-amino-1-(5-phospho-beta-D-ribosyl)imidazole-4-carboxamide + L-glutamate + H(+). It catalyses the reaction L-glutamine + H2O = L-glutamate + NH4(+). It functions in the pathway amino-acid biosynthesis; L-histidine biosynthesis; L-histidine from 5-phospho-alpha-D-ribose 1-diphosphate: step 5/9. IGPS catalyzes the conversion of PRFAR and glutamine to IGP, AICAR and glutamate. The HisH subunit catalyzes the hydrolysis of glutamine to glutamate and ammonia as part of the synthesis of IGP and AICAR. The resulting ammonia molecule is channeled to the active site of HisF. The polypeptide is Imidazole glycerol phosphate synthase subunit HisH (Desulfitobacterium hafniense (strain DSM 10664 / DCB-2)).